The sequence spans 630 residues: GTPase-activating protein NEL1 (630 aa).

The protein belongs to the SEC23/SEC24 family. SEC23 subfamily.

The protein resides in the cytoplasm. It localises to the nucleus. Acts as a GTPase-activating protein (GAP) for SAR1. Contrary to its SEC23 homolog, NEL1 does not associate with SEC24 and its homologs, nor does it associate with the COPII components, suggesting that it is unlikely that NEL1 functions as a structural component of the vesicle coat machinery. May function as a signaling molecule. The polypeptide is GTPase-activating protein NEL1 (Saccharomyces cerevisiae (strain ATCC 204508 / S288c) (Baker's yeast)).